The following is a 376-amino-acid chain: Putative 12-oxophytodienoate reductase 2 (376 aa).

FMN contacts are provided by residues 31–33 (PLT), A64, and Q106. 178-181 (HGAH) provides a ligand contact to substrate. The active-site Proton donor is Y183. Residues R230, G301, and 322–323 (GR) contribute to the FMN site.

The protein belongs to the NADH:flavin oxidoreductase/NADH oxidase family. It depends on FMN as a cofactor.

Its function is as follows. Putative oxophytodienoate reductase that may be involved in the biosynthesis or metabolism of oxylipin signaling molecules. The polypeptide is Putative 12-oxophytodienoate reductase 2 (OPR2) (Oryza sativa subsp. japonica (Rice)).